A 444-amino-acid chain; its full sequence is D(2) dopamine receptor (444 aa).

Topologically, residues 1 to 37 are extracellular; that stretch reads MDPLNLSWYDDDLERQNWSRPFNGSEGKPDRPHYNYY. N-linked (GlcNAc...) asparagine glycosylation is found at Asn-5, Asn-17, and Asn-23. The chain crosses the membrane as a helical span at residues 38–60; it reads AMLLTLLIFIIVFGNVLVCMAVS. The Cytoplasmic segment spans residues 61–70; the sequence is REKALQTTTN. The chain crosses the membrane as a helical span at residues 71 to 93; sequence YLIVSLAVADLLVATLVMPWVVY. Residues 94-108 lie on the Extracellular side of the membrane; that stretch reads LEVVGEWKFSRIHCD. Cys-107 and Cys-182 form a disulfide bridge. A helical membrane pass occupies residues 109-130; that stretch reads IFVTLDVMMCTASILNLCAISI. Topologically, residues 131–151 are cytoplasmic; the sequence is DRYTAVAMPMLYNTRYSSKRR. The chain crosses the membrane as a helical span at residues 152–172; that stretch reads VTVMIAIVWVLSFTISCPLLF. Residues 173 to 188 lie on the Extracellular side of the membrane; sequence GLNNTDQNECIIANPA. A helical membrane pass occupies residues 189-213; that stretch reads FVVYSSIVSFYVPFIVTLLVYIKIY. Positions 211–374 are interaction with PPP1R9B; it reads KIYIVLRKRR…SQQKEKKATQ (164 aa). The Cytoplasmic portion of the chain corresponds to 214-374; the sequence is IVLRKRRKRV…SQQKEKKATQ (161 aa). Residues 282–329 are disordered; it reads EMLSSTSPPERTRYSPIPPSHHQLTLPDPSHHGLHSNPDSPAKPEKNG. Residues 375 to 396 form a helical membrane-spanning segment; it reads MLAIVLGVFIICWLPFFITHIL. Over 397–410 the chain is Extracellular; that stretch reads NIHCDCNIPPVLYS. A disulfide bridge connects residues Cys-400 and Cys-402. The chain crosses the membrane as a helical span at residues 411 to 432; the sequence is AFTWLGYVNSAVNPIIYTTFNI. The Cytoplasmic portion of the chain corresponds to 433–444; that stretch reads EFRKAFMKILHC. Cys-444 is lipidated: S-palmitoyl cysteine.

This sequence belongs to the G-protein coupled receptor 1 family. Forms homo- and heterooligomers with DRD4. The interaction with DRD4 may modulate agonist-induced downstream signaling. Interacts with CADPS and CADPS2. Interacts with GPRASP1, PPP1R9B and CLIC6. Interacts with ARRB2. Interacts with HTR2A. Interacts with DRD1. In terms of assembly, interacts with KCNA2. Post-translationally, palmitoylated. Palmitoylation which is required for proper localization to the plasma membrane and stability of the receptor could be carried on by ZDHHC4, ZDHHC3 and ZDHHC8. As to expression, expressed in retinal hyaloid vessels at postnatal day 6. Expressed in the pituitary gland, stratum, brain stem and cortex. In terms of tissue distribution, expressed in the brain stem.

It localises to the cell membrane. The protein resides in the golgi apparatus membrane. Dopamine receptor whose activity is mediated by G proteins which inhibit adenylyl cyclase. Positively regulates postnatal regression of retinal hyaloid vessels via suppression of VEGFR2/KDR activity, downstream of OPN5. This Mus musculus (Mouse) protein is D(2) dopamine receptor (Drd2).